The following is a 128-amino-acid chain: Large ribosomal subunit protein bL12 (128 aa).

As to quaternary structure, homodimer. Part of the 50S ribosomal subunit; present in 6 copies per ribosome. Forms part of the ribosomal stalk which helps the ribosome interact with GTP-bound translation factors. Forms a heptameric L10(L12)2(L12)2(L12)2 complex, where L10 forms an elongated spine to which 3 L12 dimers bind in a sequential fashion.

In terms of biological role, forms part of the ribosomal stalk which helps the ribosome interact with GTP-bound translation factors. Is thus essential for accurate translation. This is Large ribosomal subunit protein bL12 from Thermotoga maritima (strain ATCC 43589 / DSM 3109 / JCM 10099 / NBRC 100826 / MSB8).